The sequence spans 131 residues: Large ribosomal subunit protein bL17 (131 aa).

It belongs to the bacterial ribosomal protein bL17 family. Part of the 50S ribosomal subunit. Contacts protein L32.

This Burkholderia mallei (strain NCTC 10229) protein is Large ribosomal subunit protein bL17.